Consider the following 132-residue polypeptide: SH2 domain-containing protein 1B (132 aa).

Positions 5–101 constitute an SH2 domain; the sequence is YYHGRLTKQD…GMVVHLLKPI (97 aa). Residue Tyr-127 is modified to Phosphotyrosine.

As to quaternary structure, binds to the phosphorylated receptors CD84, SLAMF1, LY9 and CD244. Does not bind to non-phosphorylated SLAMF1. Interacts with SLAMF7 (via ITSM phosphorylated on 'Tyr-304'). Interacts with Src kinases HCK, LYN, FYN, FGR and LCK (via kinase domains). Interacts (phosphorylated at Tyr-127) with PLCG1.

In terms of biological role, cytoplasmic adapter regulating receptors of the signaling lymphocytic activation molecule (SLAM) family such as CD84, SLAMF1, LY9 and CD244. In SLAM signaling seems to cooperate with SH2D1A/SAP. Plays a role in regulation of effector functions of natural killer (NK) cells by controlling signal transduction through CD244/2B4 without effecting its tyrosine phosphorylation; downstream signaling involves PLCG1 and ERK activation. Activation of SLAMF7-mediated NK cell function does not effect receptor tyrosine phosphorylation but distal signaling. In the context of NK cell-mediated cytotoxicity does not enhance conjugate formation with target cells but stimulates polarization of the microtubule-organizing center and cytotoxic granules toward the NK cell synapse. Negatively regulates CD40-induced cytokine production in dendritic cells downstream of SLAM family receptors probably by inducing activation of the PI3K pathway to inhibit p38 MAPK and JNK activation. In Homo sapiens (Human), this protein is SH2 domain-containing protein 1B (SH2D1B).